We begin with the raw amino-acid sequence, 544 residues long: CTP synthase (544 aa).

The segment at 1–266 (MTRFVFITGG…DREVLRHFNL (266 aa)) is amidoligase domain. Residue S13 participates in CTP binding. S13 contacts UTP. 14-19 (SLGKGI) is a binding site for ATP. Residue Y54 participates in L-glutamine binding. D71 contacts ATP. Mg(2+) is bound by residues D71 and E140. Residues 147-149 (DIE), 187-192 (KTKPTQ), and K223 contribute to the CTP site. UTP-binding positions include 187–192 (KTKPTQ) and K223. Positions 292–543 (KIAIVGKYIT…VAAAVRQARL (252 aa)) constitute a Glutamine amidotransferase type-1 domain. G354 contacts L-glutamine. C381 serves as the catalytic Nucleophile; for glutamine hydrolysis. Residues 382-385 (FGMQ), E405, and R471 each bind L-glutamine. Catalysis depends on residues H516 and E518.

It belongs to the CTP synthase family. As to quaternary structure, homotetramer.

The catalysed reaction is UTP + L-glutamine + ATP + H2O = CTP + L-glutamate + ADP + phosphate + 2 H(+). It catalyses the reaction L-glutamine + H2O = L-glutamate + NH4(+). The enzyme catalyses UTP + NH4(+) + ATP = CTP + ADP + phosphate + 2 H(+). It functions in the pathway pyrimidine metabolism; CTP biosynthesis via de novo pathway; CTP from UDP: step 2/2. Allosterically activated by GTP, when glutamine is the substrate; GTP has no effect on the reaction when ammonia is the substrate. The allosteric effector GTP functions by stabilizing the protein conformation that binds the tetrahedral intermediate(s) formed during glutamine hydrolysis. Inhibited by the product CTP, via allosteric rather than competitive inhibition. Functionally, catalyzes the ATP-dependent amination of UTP to CTP with either L-glutamine or ammonia as the source of nitrogen. Regulates intracellular CTP levels through interactions with the four ribonucleotide triphosphates. This Granulibacter bethesdensis (strain ATCC BAA-1260 / CGDNIH1) protein is CTP synthase.